A 334-amino-acid chain; its full sequence is Holliday junction branch migration complex subunit RuvB (334 aa).

Residues 4–184 (ADRIISPNAT…FGIVQRLEFY (181 aa)) form a large ATPase domain (RuvB-L) region. Residues Ile-23, Arg-24, Gly-65, Lys-68, Thr-69, Thr-70, 131–133 (EDY), Arg-174, Tyr-184, and Arg-221 contribute to the ATP site. Thr-69 lines the Mg(2+) pocket. The interval 185-255 (SVEDLRHIVA…VADKALNMLN (71 aa)) is small ATPAse domain (RuvB-S). The segment at 258–334 (LHGFDHMDRR…YNHFGLTMPE (77 aa)) is head domain (RuvB-H). The DNA site is built by Arg-313 and Arg-318.

The protein belongs to the RuvB family. In terms of assembly, homohexamer. Forms an RuvA(8)-RuvB(12)-Holliday junction (HJ) complex. HJ DNA is sandwiched between 2 RuvA tetramers; dsDNA enters through RuvA and exits via RuvB. An RuvB hexamer assembles on each DNA strand where it exits the tetramer. Each RuvB hexamer is contacted by two RuvA subunits (via domain III) on 2 adjacent RuvB subunits; this complex drives branch migration. In the full resolvosome a probable DNA-RuvA(4)-RuvB(12)-RuvC(2) complex forms which resolves the HJ.

It is found in the cytoplasm. It carries out the reaction ATP + H2O = ADP + phosphate + H(+). The RuvA-RuvB-RuvC complex processes Holliday junction (HJ) DNA during genetic recombination and DNA repair, while the RuvA-RuvB complex plays an important role in the rescue of blocked DNA replication forks via replication fork reversal (RFR). RuvA specifically binds to HJ cruciform DNA, conferring on it an open structure. The RuvB hexamer acts as an ATP-dependent pump, pulling dsDNA into and through the RuvAB complex. RuvB forms 2 homohexamers on either side of HJ DNA bound by 1 or 2 RuvA tetramers; 4 subunits per hexamer contact DNA at a time. Coordinated motions by a converter formed by DNA-disengaged RuvB subunits stimulates ATP hydrolysis and nucleotide exchange. Immobilization of the converter enables RuvB to convert the ATP-contained energy into a lever motion, pulling 2 nucleotides of DNA out of the RuvA tetramer per ATP hydrolyzed, thus driving DNA branch migration. The RuvB motors rotate together with the DNA substrate, which together with the progressing nucleotide cycle form the mechanistic basis for DNA recombination by continuous HJ branch migration. Branch migration allows RuvC to scan DNA until it finds its consensus sequence, where it cleaves and resolves cruciform DNA. The chain is Holliday junction branch migration complex subunit RuvB from Hahella chejuensis (strain KCTC 2396).